Consider the following 472-residue polypeptide: Phosphoglucosamine mutase (472 aa).

Serine 123 functions as the Phosphoserine intermediate in the catalytic mechanism. Mg(2+) contacts are provided by serine 123, aspartate 262, aspartate 264, and aspartate 266. Serine 123 bears the Phosphoserine mark.

This sequence belongs to the phosphohexose mutase family. Mg(2+) is required as a cofactor. In terms of processing, activated by phosphorylation.

The enzyme catalyses alpha-D-glucosamine 1-phosphate = D-glucosamine 6-phosphate. Functionally, catalyzes the conversion of glucosamine-6-phosphate to glucosamine-1-phosphate. In Synechococcus elongatus (strain ATCC 33912 / PCC 7942 / FACHB-805) (Anacystis nidulans R2), this protein is Phosphoglucosamine mutase.